Consider the following 430-residue polypeptide: Septin-14 (430 aa).

Residues 48–313 (KGFSFNILCV…ECYRSNRLQK (266 aa)) form the Septin-type G domain. A G1 motif region spans residues 58–65 (GETGIGKT). Residues 58 to 65 (GETGIGKT), Gly113, 194 to 202 (KADSLSKND), Gly246, and Arg261 each bind GTP. The G3 motif stretch occupies residues 110-113 (KTVG). The interval 193–196 (AKAD) is G4 motif. Residues 329–410 (QEMYEAKRRE…IIDFYKMKAA (82 aa)) adopt a coiled-coil conformation. Residues 367-430 (DAEKELQDKF…NIKKDKDRKK (64 aa)) are required for interaction with SEPTIN4. Required for migration of cortical neurons during corticogenesis.

It belongs to the TRAFAC class TrmE-Era-EngA-EngB-Septin-like GTPase superfamily. Septin GTPase family. As to quaternary structure, septins polymerize into heterooligomeric protein complexes that form filaments, and can associate with cellular membranes, actin filaments and microtubules. GTPase activity is required for filament formation. Interacts with ACTN4. Interacts with SEPTIN9. Interacts (via C-terminus) with SEPTIN4. In terms of tissue distribution, expressed in the testis and brain including the cerebrum, hippocampus and cerebellum (at protein level).

The protein localises to the cytoplasm. It localises to the cytoskeleton. Its subcellular location is the cell projection. It is found in the axon. The protein resides in the dendrite. The protein localises to the perikaryon. It localises to the perinuclear region. Its subcellular location is the cytoplasmic vesicle. It is found in the secretory vesicle. The protein resides in the acrosome. Filament-forming cytoskeletal GTPase. Involved in the migration of cortical neurons and the formation of neuron leading processes during embryonic development. Plays a role in sperm head formation during spermiogenesis, potentially via facilitating localization of ACTN4 to cell filaments. The polypeptide is Septin-14 (Mus musculus (Mouse)).